A 745-amino-acid polypeptide reads, in one-letter code: MELFNKEEASFETLLKRLLVVCESHSRYHGSSLDPMVKVGHEMRKISGYLRCILRKHAANHDDMSLTQSIVNSYKSLFKDAQILDLYHNLLFGCMHLLLDANMSYFRMDSQKLFAVLLFKVYYKLRDIFYVTNEVRLGSLISAFVYKFKSCYDFISCNSLKYGSVRDVISGEVSLINLPPIDSNKVINRAYYRLDVKKLAINNKLVEILELDNGEIAIFEVLSEKMPYTLQTIDNLFQSLALGNHDLMNVGRSLLFRPFRSGDLDLIRLDDSGAKLKVPINNSIVLRLTCKDPIQWQEYWKHVIRKLFDSTATKEYKRSGSKISQQVYVRSNNPDYTSPKRNDDMPISSVKISDTIHNGRTLHRSIPLPGSLSSLIETSNEYPDEESLSIMSERATVSEDSDLDTSLKDIESLSCEKLIELDKSIQVPLSPKYMDTPTLKNIRTASQTFSLESVSPELIESVASEIDDSESIISEDGKDKRDKDLFDPDIDFYKPTLYRRKSSSLLSIFSKNKKNLTIDIPKNHSRSLFSLPGNQQSVTPVSATPHDDNVDETYVSFPLSINTSGGAVYFENDSVKVSLWNGKSWVPLSKDMLCLSLILSGDNETLLIVYKDFEKEKCKLVVKLEPTWKYNRSTAQDVQLRIPSSDFKASVFGTLHDLTLSIRCAQAAKLVNVLQYQLQSSQTSSLSPSTTTGTLSTVSSSSCFSRNVTRSSTENSELANMKDSSEYISSSLLLSSVKVRQLRNM.

It belongs to the UPF0508 family.

This is UPF0508 protein YJR030C from Saccharomyces cerevisiae (strain ATCC 204508 / S288c) (Baker's yeast).